The sequence spans 81 residues: Omega-conotoxin-like TxO4 (81 aa).

Positions 1-22 are cleaved as a signal peptide; it reads MKLTCVVIVAVLFLTAWTFVTA. A propeptide spanning residues 23–52 is cleaved from the precursor; that stretch reads VPHSSNALENLYLKARHEMENPEASKLNTR. 3 disulfide bridges follow: Cys-55/Cys-72, Cys-62/Cys-76, and Cys-71/Cys-80. Position 70 is a 4-hydroxyproline; partial (Pro-70). Position 75 is a 6'-bromotryptophan; partial (Trp-75).

This sequence belongs to the conotoxin O1 superfamily. Post-translationally, txO4 is found with and without hydroxyproline and these two forms have a bromotryptophan. Truncated TxO4 is found with and without bromotryptophan, and these two forms have no hydroxyproline. In terms of tissue distribution, expressed by the venom duct.

It is found in the secreted. In terms of biological role, omega-conotoxins act at presynaptic membranes, they bind and block voltage-gated calcium channels (Cav). The polypeptide is Omega-conotoxin-like TxO4 (Conus textile (Cloth-of-gold cone)).